We begin with the raw amino-acid sequence, 393 residues long: Phospho-N-acetylmuramoyl-pentapeptide-transferase (393 aa).

A run of 10 helical transmembrane segments spans residues 29-49 (RAVM…PWVI), 75-95 (TPTM…LLWF), 101-121 (FVWV…VDDW), 138-158 (YLWQ…SVSE), 194-214 (VSYP…IVGA), 226-246 (GLAI…AYVT), 263-283 (AGEL…FLWF), 290-310 (VFMG…IAVI), 315-335 (IVLG…MAQV), and 370-390 (QVVV…LSTL).

Belongs to the glycosyltransferase 4 family. MraY subfamily. Requires Mg(2+) as cofactor.

The protein localises to the cell inner membrane. The catalysed reaction is UDP-N-acetyl-alpha-D-muramoyl-L-alanyl-gamma-D-glutamyl-meso-2,6-diaminopimeloyl-D-alanyl-D-alanine + di-trans,octa-cis-undecaprenyl phosphate = di-trans,octa-cis-undecaprenyl diphospho-N-acetyl-alpha-D-muramoyl-L-alanyl-D-glutamyl-meso-2,6-diaminopimeloyl-D-alanyl-D-alanine + UMP. Its pathway is cell wall biogenesis; peptidoglycan biosynthesis. In terms of biological role, catalyzes the initial step of the lipid cycle reactions in the biosynthesis of the cell wall peptidoglycan: transfers peptidoglycan precursor phospho-MurNAc-pentapeptide from UDP-MurNAc-pentapeptide onto the lipid carrier undecaprenyl phosphate, yielding undecaprenyl-pyrophosphoryl-MurNAc-pentapeptide, known as lipid I. The polypeptide is Phospho-N-acetylmuramoyl-pentapeptide-transferase (Leptothrix cholodnii (strain ATCC 51168 / LMG 8142 / SP-6) (Leptothrix discophora (strain SP-6))).